The primary structure comprises 508 residues: Photosystem II CP47 reaction center protein (508 aa).

A run of 6 helical transmembrane segments spans residues 21–36, 101–115, 140–156, 203–218, 237–252, and 457–472; these read SVHLMHTALVSGWAGS, IVLSGLLFLAAIWHW, GIHLFLSGVLCFGFGAF, IAAGILGILAGLFHLS, VLSSSIAAVFFAAFVV, and TFALIFFFGHIWHGAR.

Belongs to the PsbB/PsbC family. PsbB subfamily. As to quaternary structure, PSII is composed of 1 copy each of membrane proteins PsbA, PsbB, PsbC, PsbD, PsbE, PsbF, PsbH, PsbI, PsbJ, PsbK, PsbL, PsbM, PsbT, PsbX, PsbY, PsbZ, Psb30/Ycf12, at least 3 peripheral proteins of the oxygen-evolving complex and a large number of cofactors. It forms dimeric complexes. The cofactor is Binds multiple chlorophylls. PSII binds additional chlorophylls, carotenoids and specific lipids..

The protein resides in the plastid. It localises to the chloroplast thylakoid membrane. Functionally, one of the components of the core complex of photosystem II (PSII). It binds chlorophyll and helps catalyze the primary light-induced photochemical processes of PSII. PSII is a light-driven water:plastoquinone oxidoreductase, using light energy to abstract electrons from H(2)O, generating O(2) and a proton gradient subsequently used for ATP formation. The sequence is that of Photosystem II CP47 reaction center protein from Angiopteris evecta (Mule's foot fern).